Consider the following 697-residue polypeptide: uncharacterized protein (697 aa).

A coiled-coil region spans residues 516–545; it reads ADQSQNDVVALSSRIDRLTQEVVALQNSEK.

This is an uncharacterized protein from Callospermophilus lateralis (Golden-mantled ground squirrel).